The following is a 77-amino-acid chain: Small ribosomal subunit protein uS17 (77 aa).

This sequence belongs to the universal ribosomal protein uS17 family. Part of the 30S ribosomal subunit.

One of the primary rRNA binding proteins, it binds specifically to the 5'-end of 16S ribosomal RNA. The chain is Small ribosomal subunit protein uS17 from Rickettsia akari (strain Hartford).